The following is a 240-amino-acid chain: Fibronectin type III domain-containing protein 5 (240 aa).

A compositionally biased stretch (gly residues) spans methionine 1–arginine 10. Residues methionine 1–proline 33 form a disordered region. Residues proline 11 to arginine 24 are compositionally biased toward basic and acidic residues. The Fibronectin type-III domain maps to alanine 64–glutamate 155. N-linked (GlcNAc...) asparagine glycans are attached at residues asparagine 67 and asparagine 112. Residues glycine 181 to cysteine 201 form a helical membrane-spanning segment. Residues asparagine 210–serine 221 are compositionally biased toward basic and acidic residues. Residues asparagine 210–isoleucine 240 form a disordered region. Gly residues predominate over residues glutamine 231–isoleucine 240. Positions serine 238–isoleucine 240 match the Microbody targeting signal motif.

Dimer; may exist in other oligomeric forms. In terms of processing, the extracellular domain is cleaved and released from the cell membrane. N-Glycosylated. In terms of tissue distribution, in adult, it is highly expressed in skeletal muscle, heart and brain.

It localises to the cell membrane. It is found in the peroxisome membrane. Its subcellular location is the secreted. Its function is as follows. Mediates beneficial effects of muscular exercise. Induces browning of white adipose tissue by stimulating UCP1 expression, at least in part, via the nuclear receptor PPARA. The polypeptide is Fibronectin type III domain-containing protein 5 (Fndc5) (Mus musculus (Mouse)).